Here is a 433-residue protein sequence, read N- to C-terminus: 5-methylthioadenosine/S-adenosylhomocysteine deaminase (433 aa).

Residues histidine 62 and histidine 64 each coordinate Zn(2+). Residues glutamate 91, arginine 143, and histidine 183 each coordinate substrate. Histidine 210 serves as a coordination point for Zn(2+). 2 residues coordinate substrate: glutamate 213 and aspartate 298. Aspartate 298 provides a ligand contact to Zn(2+).

This sequence belongs to the metallo-dependent hydrolases superfamily. MTA/SAH deaminase family. The cofactor is Zn(2+).

It catalyses the reaction S-adenosyl-L-homocysteine + H2O + H(+) = S-inosyl-L-homocysteine + NH4(+). The catalysed reaction is S-methyl-5'-thioadenosine + H2O + H(+) = S-methyl-5'-thioinosine + NH4(+). Its function is as follows. Catalyzes the deamination of 5-methylthioadenosine and S-adenosyl-L-homocysteine into 5-methylthioinosine and S-inosyl-L-homocysteine, respectively. Is also able to deaminate adenosine. The sequence is that of 5-methylthioadenosine/S-adenosylhomocysteine deaminase from Caldanaerobacter subterraneus subsp. tengcongensis (strain DSM 15242 / JCM 11007 / NBRC 100824 / MB4) (Thermoanaerobacter tengcongensis).